The sequence spans 604 residues: Serine/threonine-protein kinase A-Raf (604 aa).

Residues 19 to 91 (GTVKVYLPNK…DGEELIVEVL (73 aa)) enclose the RBD domain. Residues 98–144 (MHNFVRKTFFSLAFCDFCLKFLFHGFRCQTCGYKFHQHCSSKVPTVC) form a Phorbol-ester/DAG-type zinc finger. Positions 99, 112, 115, 125, 128, 133, 136, and 144 each coordinate Zn(2+). Ser-157 and Ser-162 each carry phosphoserine. Disordered regions lie at residues 178-222 (ELLT…HMVS) and 241-287 (TDAA…DEKK). A Phosphothreonine modification is found at Thr-181. Ser-186 is subject to Phosphoserine. A compositionally biased stretch (polar residues) spans 210-222 (IRSTSTPNVHMVS). Residues 252–265 (PRGSPSPASVSSGR) are compositionally biased toward low complexity. Residues Ser-255 and Ser-267 each carry the phosphoserine modification. Residues 272-287 (LPAEQRERKSLADEKK) show a composition bias toward basic and acidic residues. The region spanning 308-568 (VQLLKRIGTG…PQILATIELL (261 aa)) is the Protein kinase domain. Residues 314 to 322 (IGTGSFGTV) and Lys-334 contribute to the ATP site. Thr-316 carries the phosphothreonine modification. Catalysis depends on Asp-427, which acts as the Proton acceptor.

Belongs to the protein kinase superfamily. TKL Ser/Thr protein kinase family. RAF subfamily. In terms of assembly, interacts with TH1L/NELFD. Zn(2+) serves as cofactor. Dephosphorylation by the SHOC2-MRAS-PP1c (SMP) complex consisting of SHOC2, GTP-bound M-Ras/MRAS and the catalytic subunit of protein phosphatase 1 (PPP1CA, PPP1CB or PPP1CC); this relieves inactivation and stimulates kinase activity.

It carries out the reaction L-seryl-[protein] + ATP = O-phospho-L-seryl-[protein] + ADP + H(+). It catalyses the reaction L-threonyl-[protein] + ATP = O-phospho-L-threonyl-[protein] + ADP + H(+). Functionally, involved in the transduction of mitogenic signals from the cell membrane to the nucleus. May also regulate the TOR signaling cascade. Phosphorylates PFKFB2. This Rattus norvegicus (Rat) protein is Serine/threonine-protein kinase A-Raf (Araf).